Here is a 269-residue protein sequence, read N- to C-terminus: Undecaprenyl-diphosphatase (269 aa).

The next 8 membrane-spanning stretches (helical) occupy residues 1–21 (MDIM…ILPI), 40–59 (GLTF…CVYF), 87–107 (FFII…EKPI), 117–137 (LIAL…TTGP), 147–166 (LRGA…PGVS), 188–208 (FSFL…MGEL), 220–240 (PLLA…ALLL), and 248–268 (LYPF…YLFA).

This sequence belongs to the UppP family.

Its subcellular location is the cell inner membrane. The enzyme catalyses di-trans,octa-cis-undecaprenyl diphosphate + H2O = di-trans,octa-cis-undecaprenyl phosphate + phosphate + H(+). In terms of biological role, catalyzes the dephosphorylation of undecaprenyl diphosphate (UPP). Confers resistance to bacitracin. The polypeptide is Undecaprenyl-diphosphatase (Geobacter sulfurreducens (strain ATCC 51573 / DSM 12127 / PCA)).